We begin with the raw amino-acid sequence, 74 residues long: uncharacterized protein (74 aa).

This is an uncharacterized protein from Vaccinia virus (strain Copenhagen) (VACV).